The following is a 336-amino-acid chain: NADH-cytochrome b5 reductase 2 (336 aa).

The helical transmembrane segment at 28-50 threads the bilayer; that stretch reads GGSSNGALYVGIGAAGLAGAYIY. The FAD-binding FR-type domain occupies 84–189; it reads QGFISLLLDK…KGPIPKYPWS (106 aa). Residue 192 to 227 coordinates FAD; it reads KHEHIALIAGGTGITPMWQTARAIFKNPEDKTKVTL.

Belongs to the flavoprotein pyridine nucleotide cytochrome reductase family. FAD serves as cofactor.

The protein localises to the mitochondrion outer membrane. It catalyses the reaction 2 Fe(III)-[cytochrome b5] + NADH = 2 Fe(II)-[cytochrome b5] + NAD(+) + H(+). Functionally, may mediate the reduction of outer membrane cytochrome b5. The protein is NADH-cytochrome b5 reductase 2 (MCR1) of Phaeosphaeria nodorum (strain SN15 / ATCC MYA-4574 / FGSC 10173) (Glume blotch fungus).